Consider the following 159-residue polypeptide: MKKMHGFTLIELMIVVAIIGVLASTALMQYQNFVVRSQVTRVLMEAGELRLAVEQCLNDGTTKIGNGQNECDPRASGSNIISGASQNPEIVIAANTGVVQFPNPLTEETALTATFNNSAASIIHGKKLIWQRQKSGSWYCHSNAAEKFLPSGCKYDASL.

A propeptide spans 1-6 (MKKMHG) (leader sequence). F7 carries the post-translational modification N-methylphenylalanine. A helical membrane pass occupies residues 7-27 (FTLIELMIVVAIIGVLASTAL). 2 disulfides stabilise this stretch: C56-C71 and C140-C153.

It belongs to the N-Me-Phe pilin family. The pili are polar flexible filaments of about 5.4 nanometers diameter and 2.5 micrometers average length; they consist of only a single polypeptide chain arranged in a helical configuration of five subunits per turn in the assembled pilus.

It localises to the fimbrium. Its subcellular location is the membrane. In Dichelobacter nodosus (Bacteroides nodosus), this protein is Probable minor fimbrial protein (fimZ).